Consider the following 361-residue polypeptide: MDSALPVSAIGFEGFEKRLEISFFEPGLFADPNGKGLRSLSKAQLDEILGPAECTIVDSLSNDDVDSYVLSESSLFVYSYKIIIKTCGTTKLLLAIPPILKLAETLSLKVQDVRYTRGSFIFPGAQSFPHRHFSEEVAVLDGYFGKLAAGSKAVIMGSPDKAQKWHVYSASAGPIQSNDPVYTLEMCMTGLDREKASVFYKTEGSSAAHMTVRSGIRKILPNSEICDFEFEPCGYSMNSIEGAALSTIHITPEDGFSYASFEAVGYDMKTMKLGPLVERVLACFEPDEFSIALHADVATKLLERVCSVDVKGYSLAEWSPEEFGKGGSIVYQKFTRTPFCGSPKSVLKGCWKEDEEKEEKE.

Residues Glu-13 and Glu-16 contribute to the active site. Residue Ser-73 is the Schiff-base intermediate with substrate; via pyruvic acid of the active site. At Ser-73 the chain carries Pyruvic acid (Ser); by autocatalysis. Cys-87 serves as the catalytic Proton donor; for catalytic activity. Active-site proton acceptor; for processing activity residues include Ser-236 and His-249.

This sequence belongs to the eukaryotic AdoMetDC family. The cofactor is pyruvate. Post-translationally, is synthesized initially as an inactive proenzyme. Formation of the active enzyme involves a self-maturation process in which the active site pyruvoyl group is generated from an internal serine residue via an autocatalytic post-translational modification. Two non-identical subunits are generated from the proenzyme in this reaction, and the pyruvate is formed at the N-terminus of the alpha chain, which is derived from the carboxyl end of the proenzyme. The post-translation cleavage follows an unusual pathway, termed non-hydrolytic serinolysis, in which the side chain hydroxyl group of the serine supplies its oxygen atom to form the C-terminus of the beta chain, while the remainder of the serine residue undergoes an oxidative deamination to produce ammonia and the pyruvoyl group blocking the N-terminus of the alpha chain.

The catalysed reaction is S-adenosyl-L-methionine + H(+) = S-adenosyl 3-(methylsulfanyl)propylamine + CO2. It participates in amine and polyamine biosynthesis; S-adenosylmethioninamine biosynthesis; S-adenosylmethioninamine from S-adenosyl-L-methionine: step 1/1. This chain is S-adenosylmethionine decarboxylase proenzyme (SAMDC), found in Nicotiana tabacum (Common tobacco).